The following is an 837-amino-acid chain: Protein ROD1 (837 aa).

Phosphoserine is present on residues Ser138 and Ser141. Lys401 is covalently cross-linked (Glycyl lysine isopeptide (Lys-Gly) (interchain with G-Cter in ubiquitin)). Ser436 bears the Phosphoserine mark. The PY-motif motif lies at 487–490 (PPNY). Residue Ser536 is modified to Phosphoserine. A PY-motif motif is present at residues 656–659 (PPAY). Disordered regions lie at residues 675-726 (ERPQ…SVSL) and 763-837 (SFTS…RDRS). A compositionally biased stretch (low complexity) spans 685–703 (TSSLLPLPGSSKSSNNLKR). Polar residues predominate over residues 716–726 (PRNNSGSSVSL). Phosphoserine is present on residues Ser720 and Ser725. The span at 763-773 (SFTSNSSSKNN) shows a compositional bias: low complexity. A compositionally biased stretch (basic and acidic residues) spans 774–792 (SHFDKTDSTSDANKPREEE). Residues 805 to 815 (SSSVRSNNSNS) are compositionally biased toward low complexity.

The protein belongs to the arrestin family. Interacts with RSP5 via its 2 PY-motifs.

Its subcellular location is the membrane. In terms of biological role, mediates resistance to o-dinitrobenzene, calcium and zinc. The polypeptide is Protein ROD1 (ROD1) (Saccharomyces cerevisiae (strain ATCC 204508 / S288c) (Baker's yeast)).